A 186-amino-acid chain; its full sequence is UPF0398 protein LCA_0919 (186 aa).

Belongs to the UPF0398 family.

The chain is UPF0398 protein LCA_0919 from Latilactobacillus sakei subsp. sakei (strain 23K) (Lactobacillus sakei subsp. sakei).